The following is a 199-amino-acid chain: Molybdenum cofactor guanylyltransferase (199 aa).

Residues 12-14, lysine 25, asparagine 53, aspartate 71, and aspartate 101 contribute to the GTP site; that span reads LAG. Aspartate 101 is a binding site for Mg(2+).

The protein belongs to the MobA family. As to quaternary structure, monomer. Mg(2+) is required as a cofactor.

Its subcellular location is the cytoplasm. It carries out the reaction Mo-molybdopterin + GTP + H(+) = Mo-molybdopterin guanine dinucleotide + diphosphate. Functionally, transfers a GMP moiety from GTP to Mo-molybdopterin (Mo-MPT) cofactor (Moco or molybdenum cofactor) to form Mo-molybdopterin guanine dinucleotide (Mo-MGD) cofactor. The polypeptide is Molybdenum cofactor guanylyltransferase (Cupriavidus pinatubonensis (strain JMP 134 / LMG 1197) (Cupriavidus necator (strain JMP 134))).